Reading from the N-terminus, the 303-residue chain is Probable porphobilinogen deaminase (303 aa).

Cys240 is modified (S-(dipyrrolylmethanemethyl)cysteine).

Belongs to the HMBS family. It depends on dipyrromethane as a cofactor.

It catalyses the reaction 4 porphobilinogen + H2O = hydroxymethylbilane + 4 NH4(+). It participates in porphyrin-containing compound metabolism; protoporphyrin-IX biosynthesis; coproporphyrinogen-III from 5-aminolevulinate: step 2/4. Its function is as follows. Tetrapolymerization of the monopyrrole PBG into the hydroxymethylbilane pre-uroporphyrinogen in several discrete steps. This Hyperthermus butylicus (strain DSM 5456 / JCM 9403 / PLM1-5) protein is Probable porphobilinogen deaminase.